The chain runs to 367 residues: Chorismate synthase (367 aa).

NADP(+) is bound by residues arginine 48 and arginine 54. FMN is bound by residues 125 to 127 (RSS), 238 to 239 (NA), glycine 278, 293 to 297 (KPTSS), and arginine 319.

The protein belongs to the chorismate synthase family. Homotetramer. The cofactor is FMNH2.

The catalysed reaction is 5-O-(1-carboxyvinyl)-3-phosphoshikimate = chorismate + phosphate. The protein operates within metabolic intermediate biosynthesis; chorismate biosynthesis; chorismate from D-erythrose 4-phosphate and phosphoenolpyruvate: step 7/7. In terms of biological role, catalyzes the anti-1,4-elimination of the C-3 phosphate and the C-6 proR hydrogen from 5-enolpyruvylshikimate-3-phosphate (EPSP) to yield chorismate, which is the branch point compound that serves as the starting substrate for the three terminal pathways of aromatic amino acid biosynthesis. This reaction introduces a second double bond into the aromatic ring system. This is Chorismate synthase from Stenotrophomonas maltophilia (strain R551-3).